Reading from the N-terminus, the 612-residue chain is Rhamnogalacturonan exolyase YesX (612 aa).

Residue asparagine 119 participates in substrate binding. Ca(2+) is bound by residues aspartate 120, aspartate 125, aspartate 127, aspartate 129, glutamate 131, and glutamate 133. 3 residues coordinate substrate: aspartate 139, glutamate 154, and arginine 174. Ca(2+) is bound by residues aspartate 189, aspartate 191, aspartate 193, lysine 195, and glutamate 197. Substrate contacts are provided by glycine 205 and arginine 222. Positions 330, 336, 338, 340, 342, 344, 353, 354, 366, 368, 374, 376, 379, 381, 383, and 389 each coordinate Ca(2+). Position 419 (arginine 419) interacts with substrate. Ca(2+) is bound by residues aspartate 472, aspartate 474, valine 476, and glutamate 478. 516-518 contributes to the substrate binding site; the sequence is NGT. Positions 527, 529, 531, 533, 535, 576, and 578 each coordinate Ca(2+). Substrate is bound at residue tyrosine 579. Asparagine 580 contacts Ca(2+).

This sequence belongs to the polysaccharide lyase 11 family. In terms of assembly, monomer. The cofactor is Mn(2+). Zn(2+) serves as cofactor. Co(2+) is required as a cofactor. Requires Ca(2+) as cofactor.

The protein localises to the secreted. It catalyses the reaction Exotype eliminative cleavage of alpha-L-rhamnopyranosyl-(1-&gt;4)-alpha-D-galactopyranosyluronic acid bonds of rhamnogalacturonan I oligosaccharides containing alpha-L-rhamnopyranose at the reducing end and 4-deoxy-4,5-unsaturated D-galactopyranosyluronic acid at the non-reducing end. The products are the disaccharide 2-O-(4-deoxy-beta-L-threo-hex-4-enopyranuronosyl)-alpha-L-rhamnopyranose and the shortened rhamnogalacturonan oligosaccharide containing one 4-deoxy-4,5-unsaturated D-galactopyranosyluronic acid at the non-reducing end.. Functionally, pectinolytic enzyme that degrades type I rhamnogalacturonan from plant cell walls and releases disaccharide products. Degrades rhamnogalacturonan, polygalacturonic acid and pectic acid. Has very low activity on pectin. The polypeptide is Rhamnogalacturonan exolyase YesX (yesX) (Bacillus subtilis (strain 168)).